The chain runs to 125 residues: Ribonuclease P protein component (125 aa).

Belongs to the RnpA family. Consists of a catalytic RNA component (M1 or rnpB) and a protein subunit.

It catalyses the reaction Endonucleolytic cleavage of RNA, removing 5'-extranucleotides from tRNA precursor.. In terms of biological role, RNaseP catalyzes the removal of the 5'-leader sequence from pre-tRNA to produce the mature 5'-terminus. It can also cleave other RNA substrates such as 4.5S RNA. The protein component plays an auxiliary but essential role in vivo by binding to the 5'-leader sequence and broadening the substrate specificity of the ribozyme. The chain is Ribonuclease P protein component from Clostridium perfringens (strain ATCC 13124 / DSM 756 / JCM 1290 / NCIMB 6125 / NCTC 8237 / Type A).